Consider the following 1335-residue polypeptide: Bifunctional autolysin (1335 aa).

The N-terminal stretch at 1–29 (MAKKFNYKLPSMVALTLFGTAFTAHQANA) is a signal peptide. 3 disordered regions span residues 51 to 88 (QAEKAKSEVTQSTTNVSGTQTYQDPTQVQPKQDTQSTT), 100 to 262 (NEIS…KYKE), and 514 to 535 (WGTTSTKPSQPSKPSGGTNNKL). Composition is skewed to polar residues over residues 58–88 (EVTQSTTNVSGTQTYQDPTQVQPKQDTQSTT), 100–127 (NEISSNQKQQSLSTDDANQNQTNSVTKN), 143–155 (TDTNQLQETQSVA), 176–223 (TASQ…NASG), and 244–258 (SLNNVNATSKQTTSY). The segment at 303-863 (VSSQKTSSLP…LSTQSTPAPK (561 aa)) is N-acetylmuramoyl-L-alanine amidase. A compositionally biased stretch (low complexity) spans 515–531 (GTTSTKPSQPSKPSGGT). 7 GW domains span residues 533–610 (NKLT…YNTA), 612–686 (APVK…TASK), 700–774 (TVTN…YNTA), 776–850 (SPVK…APSK), 868–943 (STQT…TQNI), 945–1020 (KQTQ…QNST), and 1023–1096 (QSTP…KEKI). The endo-beta-N-acetylglucosaminidase stretch occupies residues 864–1335 (QVKPSTQTVN…GKYFEIPTYK (472 aa)).

It in the N-terminal section; belongs to the N-acetylmuramoyl-L-alanine amidase 2 family. The protein in the C-terminal section; belongs to the glycosyl hydrolase 73 family. Oligomer; forms a ring structure at the cell surface which is important for efficient partitioning of daughter cells after cell division. Undergoes proteolytic processing to generate the two extracellular lytic enzymes, probably at the septal region on the cell surface.

The protein resides in the secreted. It carries out the reaction Hydrolyzes the link between N-acetylmuramoyl residues and L-amino acid residues in certain cell-wall glycopeptides.. The enzyme catalyses an N(4)-(oligosaccharide-(1-&gt;3)-[oligosaccharide-(1-&gt;6)]-beta-D-Man-(1-&gt;4)-beta-D-GlcNAc-(1-&gt;4)-alpha-D-GlcNAc)-L-asparaginyl-[protein] + H2O = an oligosaccharide-(1-&gt;3)-[oligosaccharide-(1-&gt;6)]-beta-D-Man-(1-&gt;4)-D-GlcNAc + N(4)-(N-acetyl-beta-D-glucosaminyl)-L-asparaginyl-[protein]. Its function is as follows. Endohydrolysis of the di-N-acetylchitobiosyl unit in high-mannose glycopeptides and glycoproteins containing the -[(Man)5(GlcNAc)2]-Asn structure. One N-acetyl-D-glucosamine residue remains attached to the protein; the rest of the oligosaccharide is released intact. Cleaves the peptidoglycan connecting the daughter cells at the end of the cell division cycle, resulting in the separation of the two newly divided cells. Acts as an autolysin in penicillin-induced lysis. As a bacterial surface-associated protein, mediates attachment to polystyrene surfaces, contributing to biofilm formation. Also has vitronectin-binding activity. The sequence is that of Bifunctional autolysin (atl) from Staphylococcus epidermidis.